A 338-amino-acid polypeptide reads, in one-letter code: Methionine import ATP-binding protein MetN 2 (338 aa).

Positions 2–242 constitute an ABC transporter domain; it reads IEIEKVCVDF…PQHAFTQQLV (241 aa). Residue 39–46 participates in ATP binding; the sequence is GTSGAGKS.

It belongs to the ABC transporter superfamily. Methionine importer (TC 3.A.1.24) family. In terms of assembly, the complex is composed of two ATP-binding proteins (MetN), two transmembrane proteins (MetI) and a solute-binding protein (MetQ).

It localises to the cell inner membrane. It carries out the reaction L-methionine(out) + ATP + H2O = L-methionine(in) + ADP + phosphate + H(+). It catalyses the reaction D-methionine(out) + ATP + H2O = D-methionine(in) + ADP + phosphate + H(+). Its function is as follows. Part of the ABC transporter complex MetNIQ involved in methionine import. Responsible for energy coupling to the transport system. This is Methionine import ATP-binding protein MetN 2 from Salmonella typhi.